A 107-amino-acid polypeptide reads, in one-letter code: U1-lycotoxin-Ls1o (107 aa).

The N-terminal stretch at 1-20 (MMKVLVVVALLVTLISYSSS) is a signal peptide. The propeptide occupies 21-41 (EGIDDLEADELLSLMANEQTR). Cystine bridges form between C44/C59, C51/C68, C58/C86, and C70/C84.

Belongs to the neurotoxin 19 (CSTX) family. 04 (U1-Lctx) subfamily. Expressed by the venom gland.

The protein resides in the secreted. The polypeptide is U1-lycotoxin-Ls1o (Lycosa singoriensis (Wolf spider)).